Here is a 265-residue protein sequence, read N- to C-terminus: 4-hydroxy-tetrahydrodipicolinate reductase (265 aa).

Residues 7 to 12 (GASGRM), aspartate 33, 96 to 98 (GTT), and 120 to 123 (AANF) each bind NAD(+). The active-site Proton donor/acceptor is the histidine 153. Histidine 154 lines the (S)-2,3,4,5-tetrahydrodipicolinate pocket. The Proton donor role is filled by lysine 157. Residue 163-164 (GT) participates in (S)-2,3,4,5-tetrahydrodipicolinate binding.

Belongs to the DapB family.

It is found in the cytoplasm. It catalyses the reaction (S)-2,3,4,5-tetrahydrodipicolinate + NAD(+) + H2O = (2S,4S)-4-hydroxy-2,3,4,5-tetrahydrodipicolinate + NADH + H(+). It carries out the reaction (S)-2,3,4,5-tetrahydrodipicolinate + NADP(+) + H2O = (2S,4S)-4-hydroxy-2,3,4,5-tetrahydrodipicolinate + NADPH + H(+). The protein operates within amino-acid biosynthesis; L-lysine biosynthesis via DAP pathway; (S)-tetrahydrodipicolinate from L-aspartate: step 4/4. In terms of biological role, catalyzes the conversion of 4-hydroxy-tetrahydrodipicolinate (HTPA) to tetrahydrodipicolinate. This is 4-hydroxy-tetrahydrodipicolinate reductase from Cupriavidus taiwanensis (strain DSM 17343 / BCRC 17206 / CCUG 44338 / CIP 107171 / LMG 19424 / R1) (Ralstonia taiwanensis (strain LMG 19424)).